Here is a 661-residue protein sequence, read N- to C-terminus: MSNFSIISDYKPAGDQPKAIDEIIKGLNNKKRSQMLLGITGSGKTFTMANIIERTNRPTLIMAHNKTLAAQIYSEMKSIFPKNAVEYFVSYYDYYQPEAYIPKTDVFIEKDSSINEQIDLMRHSATRSLLERRDVIVVSSVSCIYGLGSPDLYYQMTVNLEPGKSYPRDKLLNDLVNLQYERNDIGFERGCFRVKGDNVDVFPSHYSDKAWRLSFFGNELEYIHEFDPLTGEKLVKLDKAIIYGNSHFVMPKETVNKAISEIEEELQKRIAFLKSQDKLLETQRINQRTQYDLEMLTETGSCKGVENYSRFFTGRKAGEPPPTLFEYLPKDALLFVDESHVSVPQIRAMYNGDRARKEVLVEHGFRLPSALDNRPLKFEEWDNFRPQTVFVSATPSLFELNETGGEVVELIIRPTGLLDPECIIKPATNQVEDLVGEIQSTIAKGFCVLVTTLTKKMAEDLTNYLQELKYKTSYLHSNIHTLERIEILRDLRQGTIDILVGINLLREGLDIPECGLVAILDADKEGFLRSEVSLIQTIGRAARNSEGRVILYADKMTKSIDKAISETMRRRTIQQEHNEKYGIIPKTINRTIHALAELEKVDSKLDKKQTHNLFENPAKLKAHIDKLRKEMLKAASNLEFEQAAKLRDQLKTLEEAALELS.

The 158-residue stretch at 25–182 (KGLNNKKRSQ…NDLVNLQYER (158 aa)) folds into the Helicase ATP-binding domain. 38 to 45 (GITGSGKT) serves as a coordination point for ATP. The Beta-hairpin motif lies at 91 to 114 (YYDYYQPEAYIPKTDVFIEKDSSI). The Helicase C-terminal domain maps to 430–592 (QVEDLVGEIQ…IIPKTINRTI (163 aa)). The region spanning 621-656 (KAHIDKLRKEMLKAASNLEFEQAAKLRDQLKTLEEA) is the UVR domain.

The protein belongs to the UvrB family. As to quaternary structure, forms a heterotetramer with UvrA during the search for lesions. Interacts with UvrC in an incision complex.

The protein resides in the cytoplasm. Functionally, the UvrABC repair system catalyzes the recognition and processing of DNA lesions. A damage recognition complex composed of 2 UvrA and 2 UvrB subunits scans DNA for abnormalities. Upon binding of the UvrA(2)B(2) complex to a putative damaged site, the DNA wraps around one UvrB monomer. DNA wrap is dependent on ATP binding by UvrB and probably causes local melting of the DNA helix, facilitating insertion of UvrB beta-hairpin between the DNA strands. Then UvrB probes one DNA strand for the presence of a lesion. If a lesion is found the UvrA subunits dissociate and the UvrB-DNA preincision complex is formed. This complex is subsequently bound by UvrC and the second UvrB is released. If no lesion is found, the DNA wraps around the other UvrB subunit that will check the other stand for damage. The protein is UvrABC system protein B of Rickettsia bellii (strain RML369-C).